Here is a 324-residue protein sequence, read N- to C-terminus: Probable UDP-sugar transporter protein SLC35A4 (324 aa).

The Cytoplasmic segment spans residues 1–18; it reads MSVEDGGLPGLGGPGQAR. Residues 19 to 39 form a helical membrane-spanning segment; that stretch reads WTLMLLLSTATYGAHAPLLAL. Residues 40 to 52 lie on the Lumenal side of the membrane; it reads CHVDGRVPFRPSS. Residues 53-73 form a helical membrane-spanning segment; the sequence is AVLLTELTKLLLCALSLLVGW. Residues 74–85 are Cytoplasmic-facing; that stretch reads QAWPPRTPPWRQ. The helical transmembrane segment at 86-106 threads the bilayer; that stretch reads AAPFALSALLYGANNNLVIHL. The Lumenal portion of the chain corresponds to 107–140; the sequence is QHYMDPSTYQVLSNLKIGSTALFYCLCLRRRLSA. A helical membrane pass occupies residues 141-161; the sequence is RQGLALLLLMAAGACYAAGGL. Residues 162–177 are Cytoplasmic-facing; it reads RDPGSPLPESPSTAAS. Residues 178–198 traverse the membrane as a helical segment; it reads GPVPLHVTAPGLLLLLLYCLI. The Lumenal portion of the chain corresponds to 199 to 214; it reads SGLSSVYTELLLKRQR. The helical transmembrane segment at 215 to 235 threads the bilayer; it reads LPLALQNLFLYTFGVLLNLGL. Residues 236 to 248 are Cytoplasmic-facing; that stretch reads HAGGGPGPGLLEG. Residues 249 to 271 form a helical membrane-spanning segment; the sequence is FSGWAALVVLSQALNGLLMSAVM. Residues 272 to 279 lie on the Lumenal side of the membrane; it reads KHGSSITR. A helical membrane pass occupies residues 280 to 300; sequence LFVVSCSLVVNAVLSAALLRL. The Cytoplasmic segment spans residues 301-324; the sequence is QLTAAFFLAALLIGLAVHLYYGSR.

It belongs to the nucleotide-sugar transporter family. SLC35A subfamily. As to quaternary structure, found in a complex with SLC35A2 and SLC35A3.

The protein localises to the golgi apparatus membrane. The catalysed reaction is CDP-L-ribitol(in) + CDP(out) = CDP-L-ribitol(out) + CDP(in). Mediates the transport of CDP-ribitol. Does not exhibit CMP-sialic acid, UDP-galactose and UDP-N-acetylglucosamine transport activity. The chain is Probable UDP-sugar transporter protein SLC35A4 from Sus scrofa (Pig).